The chain runs to 470 residues: Methylenetetrahydrofolate--tRNA-(uracil-5-)-methyltransferase TrmFO (470 aa).

Position 10-15 (10-15 (GAGLAG)) interacts with FAD.

The protein belongs to the MnmG family. TrmFO subfamily. FAD is required as a cofactor.

It is found in the cytoplasm. It carries out the reaction uridine(54) in tRNA + (6R)-5,10-methylene-5,6,7,8-tetrahydrofolate + NADH + H(+) = 5-methyluridine(54) in tRNA + (6S)-5,6,7,8-tetrahydrofolate + NAD(+). The enzyme catalyses uridine(54) in tRNA + (6R)-5,10-methylene-5,6,7,8-tetrahydrofolate + NADPH + H(+) = 5-methyluridine(54) in tRNA + (6S)-5,6,7,8-tetrahydrofolate + NADP(+). In terms of biological role, catalyzes the folate-dependent formation of 5-methyl-uridine at position 54 (M-5-U54) in all tRNAs. This Prochlorococcus marinus (strain MIT 9215) protein is Methylenetetrahydrofolate--tRNA-(uracil-5-)-methyltransferase TrmFO.